The following is a 553-amino-acid chain: HTH-type transcriptional regulator SgrR (553 aa).

The 113-residue stretch at 1 to 113 (MSTSRLQQQF…RQMLLSQLGR (113 aa)) folds into the HTH marR-type domain. A DNA-binding region (H-T-H motif) is located at residues 26 to 49 (LQALAEVLNCSRRHVRSLLGKMQH). Positions 163–494 (ELEPDLSHHW…EELHQDIESW (332 aa)) are solute-binding.

Its function is as follows. Activates the small RNA gene sgrS under glucose-phosphate stress conditions as well as yfdZ. Represses its own transcription under both stress and non-stress conditions. Might act as a sensor of the intracellular accumulation of phosphoglucose by binding these molecules in its C-terminal solute-binding domain. The chain is HTH-type transcriptional regulator SgrR from Yersinia pestis bv. Antiqua (strain Antiqua).